Here is a 501-residue protein sequence, read N- to C-terminus: MRNSCWKGKALKQLTFHLKRNSAGRNSSGRITVFHRGGGSKRLQRKIDFKRSTSSMGIVERIEYDPNRSSWIALVRWIEGVLRPGKRLAFSKANSRREKNMFFFGLLFSFSSLPRQAQRIKYEKTRALRPCEQILESSWVLGTRDLRAKEVSLGPLGSFLGLPSIAVAGAKPAFFAFRMKGPSSLTGRERLSPLRGENTFSQSEGQRWKTQSGAPRRKSLVLSWSQGPKARNGLMISAHDIGKKDRRPEMAGPHTIPEHAPRALHAVGPSGSGRVLRTSEPFTYILASENLEVGNTVMNFHGSKPSTLLNYHQPSQKANDPSGLRVEETAWDSQAWLHPRGDYASSENKYILDSYYQMVGNCIPLAKIPIGTWVHNIERNPGQGAKLTRAAGTFAQIIQKVENTPQCIVRLPSGVDKLIDSRCRATIGIVSNLNHGKRKFNKAGQSRWLGRRPIVRGVAMNPVDHPHGGGEGRTKGGRPSVSPWGKPTKGGFKTVVRKRRN.

Disordered regions lie at residues 187-217 and 459-501; these read GRER…APRR and AMNP…KRRN. Residues 198–213 are compositionally biased toward polar residues; it reads NTFSQSEGQRWKTQSG. The segment covering 464 to 474 has biased composition (basic and acidic residues); the sequence is DHPHGGGEGRT.

It belongs to the universal ribosomal protein uL2 family.

The protein resides in the mitochondrion. The sequence is that of Large ribosomal subunit protein uL2m (RPL2) from Marchantia polymorpha (Common liverwort).